Reading from the N-terminus, the 115-residue chain is MNPLIQSLTEGQLRSDIPNFRPGDTVRVHAKVVEGTRERIQIFEGVVISRKGQGISEMYTVRKISGGIGVERTFPIHTPRVDKIEVVRHGKVRRAKLYYLRALQGKAARIKEIRR.

This sequence belongs to the bacterial ribosomal protein bL19 family.

Its function is as follows. This protein is located at the 30S-50S ribosomal subunit interface and may play a role in the structure and function of the aminoacyl-tRNA binding site. This is Large ribosomal subunit protein bL19 from Streptococcus pyogenes serotype M2 (strain MGAS10270).